Consider the following 335-residue polypeptide: tRNA N6-adenosine threonylcarbamoyltransferase (335 aa).

Fe cation contacts are provided by His-112 and His-116. Residues 134–138 (VVSGG), Asp-167, Gly-180, and Asn-273 each bind substrate. Asp-301 lines the Fe cation pocket.

It belongs to the KAE1 / TsaD family. It depends on Fe(2+) as a cofactor.

The protein resides in the cytoplasm. The catalysed reaction is L-threonylcarbamoyladenylate + adenosine(37) in tRNA = N(6)-L-threonylcarbamoyladenosine(37) in tRNA + AMP + H(+). In terms of biological role, required for the formation of a threonylcarbamoyl group on adenosine at position 37 (t(6)A37) in tRNAs that read codons beginning with adenine. Is involved in the transfer of the threonylcarbamoyl moiety of threonylcarbamoyl-AMP (TC-AMP) to the N6 group of A37, together with TsaE and TsaB. TsaD likely plays a direct catalytic role in this reaction. The sequence is that of tRNA N6-adenosine threonylcarbamoyltransferase from Shouchella clausii (strain KSM-K16) (Alkalihalobacillus clausii).